The sequence spans 121 residues: Large-conductance mechanosensitive channel (121 aa).

A run of 2 helical transmembrane segments spans residues 14–34 (VLDL…VKSL) and 67–87 (GAFL…FVLI).

Belongs to the MscL family. Homopentamer.

The protein localises to the cell membrane. Channel that opens in response to stretch forces in the membrane lipid bilayer. May participate in the regulation of osmotic pressure changes within the cell. This is Large-conductance mechanosensitive channel from Lactococcus lactis subsp. cremoris (strain SK11).